Here is a 305-residue protein sequence, read N- to C-terminus: Olfactory receptor 9G9 (305 aa).

Topologically, residues 1 to 27 (MQRSNHTVTEFILLGFTTDPGMQLGLF) are extracellular. Asn-5 is a glycosylation site (N-linked (GlcNAc...) asparagine). The chain crosses the membrane as a helical span at residues 28–48 (VVFLGVYSLTVVGNSTLIVLI). Over 49 to 64 (CNDSHLHTPMYFVVGN) the chain is Cytoplasmic. Residues 65-85 (LSFLDLWYSSVYTPKILVICI) form a helical membrane-spanning segment. The Extracellular portion of the chain corresponds to 86-96 (SEDKSISFAGC). Cys-96 and Cys-178 are disulfide-bonded. A helical membrane pass occupies residues 97–117 (LCQFFFSAGLAYSECCLLAAM). The Cytoplasmic segment spans residues 118–138 (AYDRYVAISKPLLYAQAMSIK). Residues 139-159 (LCALLVAVSYCGGFINSSIIT) traverse the membrane as a helical segment. At 160–200 (KKTFSFNFCCENIIDDFFCDLLPLVKLACGEKGCYKFLMYF) the chain is on the extracellular side. The helical transmembrane segment at 201–221 (LLASNVICPAVLILASYLFII) threads the bilayer. At 222–239 (TSVLRISSSQGRLKAFST) the chain is on the cytoplasmic side. A helical membrane pass occupies residues 240–260 (CSSHLTSVTLYYGSILYIYAL). At 261 to 271 (PRSSYSFDMDK) the chain is on the extracellular side. The helical transmembrane segment at 272-291 (IVSTFYTEVLPMLNPMIYSL) threads the bilayer. Topologically, residues 292-305 (RNKDVKEALKKLLP) are cytoplasmic.

This sequence belongs to the G-protein coupled receptor 1 family.

The protein localises to the cell membrane. In terms of biological role, odorant receptor. The chain is Olfactory receptor 9G9 (OR9G9) from Homo sapiens (Human).